Here is a 107-residue protein sequence, read N- to C-terminus: Ig kappa chain V-VI region NQ2-48.2.2 (107 aa).

Residues 1 to 23 (QILLTQSPAIMSASPGQKVTMTC) are framework-1. Cys23 and Cys87 form a disulfide bridge. The segment at 24 to 33 (SASSSVSYMH) is complementarity-determining-1. Positions 34–48 (WYQQKSGTSPKRWIY) are framework-2. Residues 49-55 (DTSKLAS) form a complementarity-determining-2 region. Residues 56–87 (GVPARFSGSGSATSYSLTITSMQAEDAATYYC) are framework-3. A complementarity-determining-3 region spans residues 88–96 (QQWSSNPLT). Positions 97-106 (FGAGTKLXLK) are framework-4.

Anti-2-phenyl oxazolone (PHOX) Antibody. The chain is Ig kappa chain V-VI region NQ2-48.2.2 from Mus musculus (Mouse).